The following is a 313-amino-acid chain: Porphobilinogen deaminase (313 aa).

C242 carries the post-translational modification S-(dipyrrolylmethanemethyl)cysteine.

Belongs to the HMBS family. In terms of assembly, monomer. It depends on dipyrromethane as a cofactor.

It catalyses the reaction 4 porphobilinogen + H2O = hydroxymethylbilane + 4 NH4(+). The protein operates within porphyrin-containing compound metabolism; protoporphyrin-IX biosynthesis; coproporphyrinogen-III from 5-aminolevulinate: step 2/4. Its function is as follows. Tetrapolymerization of the monopyrrole PBG into the hydroxymethylbilane pre-uroporphyrinogen in several discrete steps. This chain is Porphobilinogen deaminase, found in Yersinia pseudotuberculosis serotype IB (strain PB1/+).